We begin with the raw amino-acid sequence, 79 residues long: Acyl carrier protein (79 aa).

The Carrier domain occupies 2–77 (ENIEQRVKKI…QAIDYVTAHL (76 aa)). Ser37 is modified (O-(pantetheine 4'-phosphoryl)serine).

Belongs to the acyl carrier protein (ACP) family. In terms of processing, 4'-phosphopantetheine is transferred from CoA to a specific serine of apo-ACP by AcpS. This modification is essential for activity because fatty acids are bound in thioester linkage to the sulfhydryl of the prosthetic group.

It is found in the cytoplasm. Its pathway is lipid metabolism; fatty acid biosynthesis. In terms of biological role, carrier of the growing fatty acid chain in fatty acid biosynthesis. In Aromatoleum aromaticum (strain DSM 19018 / LMG 30748 / EbN1) (Azoarcus sp. (strain EbN1)), this protein is Acyl carrier protein.